The sequence spans 208 residues: Large ribosomal subunit protein uL3 (208 aa).

Gln-150 is modified (N5-methylglutamine).

It belongs to the universal ribosomal protein uL3 family. In terms of assembly, part of the 50S ribosomal subunit. Forms a cluster with proteins L14 and L19. Methylated by PrmB.

In terms of biological role, one of the primary rRNA binding proteins, it binds directly near the 3'-end of the 23S rRNA, where it nucleates assembly of the 50S subunit. This is Large ribosomal subunit protein uL3 from Buchnera aphidicola subsp. Cinara cedri (strain Cc).